Here is a 233-residue protein sequence, read N- to C-terminus: B-cell lymphoma/leukemia 10 (233 aa).

M1 carries the post-translational modification N-acetylmethionine. A CARD domain is found at 13–101 (LTEVKKDALE…QNFLIQKITD (89 aa)). Residues K17, K31, and K63 each participate in a glycyl lysine isopeptide (Lys-Gly) (interchain with G-Cter in ubiquitin) cross-link. Residues 130–141 (TNNLSRSNSDES) are compositionally biased toward polar residues. Disordered stretches follow at residues 130–149 (TNNL…KQRP) and 186–233 (SFSS…LSRQ). A Phosphoserine modification is found at S138. Pro residues predominate over residues 195-205 (PGDPGAPPLPP).

Homomultimer; homooligomerized following recruitment by CARD domain-containing proteins that form a nucleating helical template that recruits BCL10 via CARD-CARD interaction. Self-associates by CARD-CARD interaction and interacts with other CARD-proteins such as CARD9, CARD10, CARD11 and CARD14. Forms a complex with CARD14 and MALT1; resulting in the formation of a CBM (CARD14-BCL10-MALT1) complex. Forms a complex with CARD11 and MALT1; resulting in the formation of a CBM (CARD11-BCL10-MALT1) complex. Forms a complex with CARD9 and MALT1; resulting in the formation of a CBM (CARD9-BCL10-MALT1) complex. Found in a membrane raft complex, at least composed of BCL10, CARD11, DPP4 and IKBKB. Binds caspase-9 with its C-terminal domain. Interacts with TRAF2 and BIRC2/c-IAP2. Interacts with PELI2 and SOCS3; these interactions may be mutually exclusive. Post-translationally, phosphorylated. Phosphorylation results in dissociation from TRAF2 and binding to BIRC2/c-IAP2. Phosphorylated by IKBKB/IKKB. In terms of processing, ubiquitinated via both 'Lys-63'-linked and linear ('Met-1'-linked) polyubiquitin chains in response to T-cell receptor (TCR) activation. Ubiquitination is recognized by IKBKG/NEMO, the regulatory subunit of I-kappa-B kinase (IKK), and is required for TCR-induced NF-kappa-B activation. Linear ubiquitination at Lys-17, Lys-31 and Lys-63 is mediated by RNF31/HOIP; linear ubiquitination is recognized with much higher affinity than 'Lys-63'-linked ubiquitin by IKBKG/NEMO. CARD11 is required for linear ubiquitination by HOIP by promoting the targeting of BCL10 to RNF31/HOIP. Proteolytically cleaved by MALT1; required for T-cell activation.

The protein resides in the cytoplasm. It is found in the perinuclear region. The protein localises to the membrane raft. Its function is as follows. Plays a key role in both adaptive and innate immune signaling by bridging CARD domain-containing proteins to immune activation. Acts by channeling adaptive and innate immune signaling downstream of CARD domain-containing proteins CARD9, CARD11 and CARD14 to activate NF-kappa-B and MAP kinase p38 (MAPK11, MAPK12, MAPK13 and/or MAPK14) pathways which stimulate expression of genes encoding pro-inflammatory cytokines and chemokines. Recruited by activated CARD domain-containing proteins: homooligomerized CARD domain-containing proteins form a nucleating helical template that recruits BCL10 via CARD-CARD interaction, thereby promoting polymerization of BCL10, subsequent recruitment of MALT1 and formation of a CBM complex. This leads to activation of NF-kappa-B and MAP kinase p38 (MAPK11, MAPK12, MAPK13 and/or MAPK14) pathways which stimulate expression of genes encoding pro-inflammatory cytokines and chemokines. Activated by CARD9 downstream of C-type lectin receptors; CARD9-mediated signals are essential for antifungal immunity. Activated by CARD11 downstream of T-cell receptor (TCR) and B-cell receptor (BCR). Promotes apoptosis, pro-caspase-9 maturation and activation of NF-kappa-B via NIK and IKK. This chain is B-cell lymphoma/leukemia 10, found in Rattus norvegicus (Rat).